Reading from the N-terminus, the 817-residue chain is Leucine--tRNA ligase (817 aa).

The 'HIGH' region motif lies at 42–52; the sequence is PYPSGKLHMGH. The short motif at 576–580 is the 'KMSKS' region element; that stretch reads KMSKS. Lys579 provides a ligand contact to ATP.

It belongs to the class-I aminoacyl-tRNA synthetase family.

It is found in the cytoplasm. The catalysed reaction is tRNA(Leu) + L-leucine + ATP = L-leucyl-tRNA(Leu) + AMP + diphosphate. This is Leucine--tRNA ligase from Methylobacillus flagellatus (strain ATCC 51484 / DSM 6875 / VKM B-1610 / KT).